The chain runs to 393 residues: Ubiquitin-like modifier-activating enzyme 5 (393 aa).

ATP contacts are provided by G75, D96, K119, N142, and N175. C217 and C220 together coordinate Zn(2+). Residue C241 is the Glycyl thioester intermediate of the active site. Zn(2+) contacts are provided by C294 and C299.

The protein belongs to the ubiquitin-activating E1 family. UBA5 subfamily.

In terms of biological role, E1-like enzyme which activates UFM1. The polypeptide is Ubiquitin-like modifier-activating enzyme 5 (Bombyx mori (Silk moth)).